Consider the following 155-residue polypeptide: MKIQLIAVGTKMPAWVEHGFEEYRRRFPKDMPFELVEIGAGKRGKNADIPRILQKEGEAMLAAAGRSRIVTLDIPGKPWTTEQLAVQLEAWKLDGRDVALLVGGPEGLSPECKAAAEQSWSLSPLTLPHPLVRVLVAESLYRAWSITTNHPYHRE.

S-adenosyl-L-methionine-binding positions include leucine 72, glycine 103, and 122 to 127; that span reads LSPLTL.

This sequence belongs to the RNA methyltransferase RlmH family. In terms of assembly, homodimer.

It localises to the cytoplasm. The enzyme catalyses pseudouridine(1915) in 23S rRNA + S-adenosyl-L-methionine = N(3)-methylpseudouridine(1915) in 23S rRNA + S-adenosyl-L-homocysteine + H(+). In terms of biological role, specifically methylates the pseudouridine at position 1915 (m3Psi1915) in 23S rRNA. This Aeromonas hydrophila subsp. hydrophila (strain ATCC 7966 / DSM 30187 / BCRC 13018 / CCUG 14551 / JCM 1027 / KCTC 2358 / NCIMB 9240 / NCTC 8049) protein is Ribosomal RNA large subunit methyltransferase H.